The primary structure comprises 265 residues: MTDPSAHSAALTYGSYLALDELLSAQRPRSEEHDELLFIVVHQVYELWFKQVVHELAYLQERLHRGEGGHALATLKRVLTILKTVVSQVDVIETMTPRQFTAFRSRLEAASGFQSAQFRVLEAMLGRRDERMLAPYPPGGPGHARIAAAMAAPSLFDSLLRYLATQGFAVPPVPEAPAAGWRPPSEAVQRVLLDVYRADGEAALVCERFVDLDEGVQEWRYRHVKMVERTIGDKPGTGGSAGAQYLRTTLFTPAFPDLWAVRGAL.

Residues 38 to 42 (FIVVH) and Arg-104 each bind substrate. His-223 lines the heme pocket. Substrate is bound at residue Thr-237.

It belongs to the tryptophan 2,3-dioxygenase family. As to quaternary structure, homotetramer. The cofactor is heme.

It carries out the reaction L-tryptophan + O2 = N-formyl-L-kynurenine. Its pathway is amino-acid degradation; L-tryptophan degradation via kynurenine pathway; L-kynurenine from L-tryptophan: step 1/2. Its function is as follows. Heme-dependent dioxygenase that catalyzes the oxidative cleavage of the L-tryptophan (L-Trp) pyrrole ring and converts L-tryptophan to N-formyl-L-kynurenine. Catalyzes the oxidative cleavage of the indole moiety. The sequence is that of Tryptophan 2,3-dioxygenase from Anaeromyxobacter sp. (strain K).